A 347-amino-acid polypeptide reads, in one-letter code: Protein RecA (347 aa).

65–72 contacts ATP; that stretch reads GPESSGKT.

The protein belongs to the RecA family.

It localises to the cytoplasm. Can catalyze the hydrolysis of ATP in the presence of single-stranded DNA, the ATP-dependent uptake of single-stranded DNA by duplex DNA, and the ATP-dependent hybridization of homologous single-stranded DNAs. It interacts with LexA causing its activation and leading to its autocatalytic cleavage. The sequence is that of Protein RecA from Aliivibrio salmonicida (strain LFI1238) (Vibrio salmonicida (strain LFI1238)).